Consider the following 340-residue polypeptide: L-galactonate-5-dehydrogenase (340 aa).

The Zn(2+) site is built by C40, C65, C92, C95, C98, C106, and E146.

This sequence belongs to the zinc-containing alcohol dehydrogenase family. Zn(2+) serves as cofactor.

The enzyme catalyses L-galactonate + NAD(+) = keto-D-tagaturonate + NADH + H(+). Inhibited by EDTA. Its function is as follows. Catalyzes the oxidation of L-galactonate to D-tagaturonate. Required for growth on L-galactonate as the sole carbon source. In vitro, can also use L-gulonate. The sequence is that of L-galactonate-5-dehydrogenase (lgoD) from Escherichia coli (strain K12).